Consider the following 133-residue polypeptide: Large ribosomal subunit protein eL19 (133 aa).

Residues 55–83 are disordered; it reads RGISGARKKPRRKGPGSRKGGKYSKLPRK. Positions 60–83 are enriched in basic residues; that stretch reads ARKKPRRKGPGSRKGGKYSKLPRK.

This sequence belongs to the eukaryotic ribosomal protein eL19 family. In terms of assembly, part of the 50S ribosomal subunit.

Functionally, binds to the 23S rRNA. In Korarchaeum cryptofilum (strain OPF8), this protein is Large ribosomal subunit protein eL19.